We begin with the raw amino-acid sequence, 359 residues long: Protein RecA (359 aa).

Position 73–80 (73–80 (GPESSGKT)) interacts with ATP.

It belongs to the RecA family.

The protein resides in the cytoplasm. Its function is as follows. Can catalyze the hydrolysis of ATP in the presence of single-stranded DNA, the ATP-dependent uptake of single-stranded DNA by duplex DNA, and the ATP-dependent hybridization of homologous single-stranded DNAs. It interacts with LexA causing its activation and leading to its autocatalytic cleavage. This is Protein RecA from Desulfovibrio desulfuricans (strain ATCC 27774 / DSM 6949 / MB).